The primary structure comprises 414 residues: 2,3-diketo-5-methylthiopentyl-1-phosphate enolase (414 aa).

The active-site Proton acceptor is the lysine 99. Residues lysine 148, 174–177 (KDDE), histidine 265, glycine 338, and 360–361 (GG) contribute to the substrate site. Lysine 174, aspartate 176, and glutamate 177 together coordinate Mg(2+). The residue at position 174 (lysine 174) is an N6-carboxylysine.

The protein belongs to the RuBisCO large chain family. Type IV subfamily. Homodimer. Requires Mg(2+) as cofactor.

The catalysed reaction is 5-methylsulfanyl-2,3-dioxopentyl phosphate = 2-hydroxy-5-methylsulfanyl-3-oxopent-1-enyl phosphate. Its pathway is amino-acid biosynthesis; L-methionine biosynthesis via salvage pathway; L-methionine from S-methyl-5-thio-alpha-D-ribose 1-phosphate: step 3/6. Catalyzes the enolization of 2,3-diketo-5-methylthiopentyl-1-phosphate (DK-MTP-1-P) into 2-hydroxy-3-keto-5-methylthiopentenyl-1-phosphate (HK-MTPenyl-1-P). This Bacillus anthracis (strain CDC 684 / NRRL 3495) protein is 2,3-diketo-5-methylthiopentyl-1-phosphate enolase.